The chain runs to 39 residues: QQHADPICNKPCKTHDDCSGAWFCQACWNSARTCGPYVG.

Glutamine 1 bears the Pyrrolidone carboxylic acid mark. Intrachain disulfides connect cysteine 8/cysteine 24, cysteine 12/cysteine 27, and cysteine 18/cysteine 34.

As to expression, highly concentrated in tubers. Closely related but distinct forms of MCPI are present in leaves, stems and buds.

In terms of biological role, may play a defensive role against insect attacks. Inhibits A.aegypti carboxypeptidase CPB1. The sequence is that of Metallocarboxypeptidase inhibitor from Solanum tuberosum (Potato).